We begin with the raw amino-acid sequence, 623 residues long: Cell pattern formation-associated protein stuA (623 aa).

Residues 13–31 are compositionally biased toward polar residues; it reads QHMQSAGQPQQPQTVTSGP. A disordered region spans residues 13–111; sequence QHMQSAGQPQ…DTTGQHPPPG (99 aa). In terms of domain architecture, HTH APSES-type spans 115–221; the sequence is RVTATLWEDE…HNIGALLYHP (107 aa). The H-T-H motif DNA-binding region spans 149–170; the sequence is GTKLLNVAGMTRGRRDGILKSE. 2 disordered regions span residues 232–270 and 332–623; these read AAAERRKQDQGQMRTPPAGLPSIQHQPHNSMALPGPQSS and ARSM…PRQR. Over residues 335–374 the composition is skewed to polar residues; that stretch reads MPTTPATTPPGSMQPYGSAQSFDGSRQQMYNAPSQQSPYP. A compositionally biased stretch (low complexity) spans 396 to 408; the sequence is GPPSSRPSGSAPS. Basic and acidic residues predominate over residues 423–446; that stretch reads EHGHQSHAGEEDGEHEQHDAEYTH. Over residues 542–553 the composition is skewed to low complexity; sequence APPADMANPMPN. The segment at 569–594 is nuclear localization domain; it reads KRGREGDDDLSRPVGDVPGMDMKRRK. Positions 570 to 579 are enriched in basic and acidic residues; sequence RGREGDDDLS.

The protein belongs to the EFG1/PHD1/stuA family.

It is found in the nucleus. Functionally, transcription factor that regulates asexual reproduction. Binds the StuA-response elements (StRE) with the consensus sequence 5'-(A/T)CGCG(T/A)N(A/C)-3' at the promoters of target genes. Controls conidiation by positively regulating the expression of brlA and abaA. Positively regulates the cephalosporin biosynthesis gene cluster. Also involved hyphal fragmentation and cell wall integrity. This chain is Cell pattern formation-associated protein stuA, found in Hapsidospora chrysogenum (strain ATCC 11550 / CBS 779.69 / DSM 880 / IAM 14645 / JCM 23072 / IMI 49137) (Acremonium chrysogenum).